The sequence spans 285 residues: 4-hydroxybenzoate octaprenyltransferase (285 aa).

A run of 8 helical transmembrane segments spans residues 28–48, 86–106, 110–130, 133–153, 160–180, 207–227, 232–252, and 262–284; these read LWAL…CIFF, IAAW…FALI, NSLT…YPFF, FFAI…PMAF, VPLV…AYDT, VAAI…AGVM, WPYW…YTLI, and AAFR…AYAI.

Belongs to the UbiA prenyltransferase family. The cofactor is Mg(2+).

The protein resides in the cell inner membrane. The catalysed reaction is all-trans-octaprenyl diphosphate + 4-hydroxybenzoate = 4-hydroxy-3-(all-trans-octaprenyl)benzoate + diphosphate. It functions in the pathway cofactor biosynthesis; ubiquinone biosynthesis. Functionally, catalyzes the prenylation of para-hydroxybenzoate (PHB) with an all-trans polyprenyl group. Mediates the second step in the final reaction sequence of ubiquinone-8 (UQ-8) biosynthesis, which is the condensation of the polyisoprenoid side chain with PHB, generating the first membrane-bound Q intermediate 3-octaprenyl-4-hydroxybenzoate. The sequence is that of 4-hydroxybenzoate octaprenyltransferase from Cupriavidus pinatubonensis (strain JMP 134 / LMG 1197) (Cupriavidus necator (strain JMP 134)).